We begin with the raw amino-acid sequence, 452 residues long: MTAVSSNRNPEDDGCLLEQEPRGRRLSPRTGTPRTTAVSSNRDPKNDGCLLKQEPRGRRLSPRTGAPGTTAVSSNRNPEDDGCLLKQEPRGRRLSPQTGTPRTTAVSSNRNPGDDGCLLKQGPRGRRLSPQTGTPGTTAVSSNRNPEDDGCLLKQEPRGRRLSPQTGTPGTTAVSSNRDHEDDGCLLKQESRGRRLSPQTGTPGTTAVSSNRNPEDDGCLLKQESRGRRLSPQTGTPGTTAVSSNRDPEDDGCLLKQGPRGRRLSPQTGTPRTTAVSSNRNPEDDGCLLKQGPRGRRLSPQTGIPRTTAVSSNRDPGEDGCLLKQESRGRRLSPQTGTTRTTAVSSKRNPEDDGCLLKQEPRGRRLSSLTGAPGTTAVSSNRDPRTTAVSSNRNPGDDGCLLKQGPRGRRLSPQTGTPGTTAVSSNRDPEDDGCLLKQEPQELRKPEADTAL.

Residues 1 to 452 (MTAVSSNRNP…LRKPEADTAL (452 aa)) are disordered. 4 stretches are compositionally biased toward polar residues: residues 29–41 (RTGT…VSSN), 95–111 (SPQT…SNRN), 129–144 (SPQT…SSNR), and 163–176 (SPQT…AVSS). Basic and acidic residues predominate over residues 177–193 (NRDHEDDGCLLKQESRG). Composition is skewed to polar residues over residues 197 to 212 (SPQT…SSNR), 231 to 245 (SPQT…VSSN), 265 to 280 (SPQT…SSNR), 299 to 314 (SPQT…SSNR), 333 to 347 (SPQT…VSSK), 376 to 394 (TAVS…SNRN), and 412 to 426 (SPQT…VSSN). The segment covering 439 to 452 (EPQELRKPEADTAL) has biased composition (basic and acidic residues).

This is an uncharacterized protein from Homo sapiens (Human).